A 209-amino-acid chain; its full sequence is Large ribosomal subunit protein uL3 (209 aa).

Gln150 is subject to N5-methylglutamine.

It belongs to the universal ribosomal protein uL3 family. As to quaternary structure, part of the 50S ribosomal subunit. Forms a cluster with proteins L14 and L19. In terms of processing, methylated by PrmB.

Functionally, one of the primary rRNA binding proteins, it binds directly near the 3'-end of the 23S rRNA, where it nucleates assembly of the 50S subunit. The polypeptide is Large ribosomal subunit protein uL3 (Aliivibrio salmonicida (strain LFI1238) (Vibrio salmonicida (strain LFI1238))).